The primary structure comprises 311 residues: MATYLDFEQKIKIIQEDIISAQVRHDDGLVASLKKNLDKEVSKIFTNLSPFQQLQLARHVDRPYALDYINLLMRDKYEIHGDRHFRDDAAILCYIGYIGEEKVVVIGEQKGRGTKNKIKRNFGMPHPEGYRKALRAAKLAEKFNLPLLMLVDTPGAYPGIGAEERNQSEAIARNLLELSQLNTQSISVVIGEGGSGGALAIGVADRFAMMRYSVFSVISPEGCSAILWNDPAKVESATNAMKITSGDLKELNLIDDIIAEPLIGAHRDRDSAAAAIGEYFLSELKKLRQMSNEQRMEERYKKLTSVGAFSE.

The CoA carboxyltransferase C-terminal domain occupies 36–286 (NLDKEVSKIF…GEYFLSELKK (251 aa)).

It belongs to the AccA family. Acetyl-CoA carboxylase is a heterohexamer composed of biotin carboxyl carrier protein (AccB), biotin carboxylase (AccC) and two subunits each of ACCase subunit alpha (AccA) and ACCase subunit beta (AccD).

It is found in the cytoplasm. The enzyme catalyses N(6)-carboxybiotinyl-L-lysyl-[protein] + acetyl-CoA = N(6)-biotinyl-L-lysyl-[protein] + malonyl-CoA. It participates in lipid metabolism; malonyl-CoA biosynthesis; malonyl-CoA from acetyl-CoA: step 1/1. Functionally, component of the acetyl coenzyme A carboxylase (ACC) complex. First, biotin carboxylase catalyzes the carboxylation of biotin on its carrier protein (BCCP) and then the CO(2) group is transferred by the carboxyltransferase to acetyl-CoA to form malonyl-CoA. The polypeptide is Acetyl-coenzyme A carboxylase carboxyl transferase subunit alpha (Sulfurimonas denitrificans (strain ATCC 33889 / DSM 1251) (Thiomicrospira denitrificans (strain ATCC 33889 / DSM 1251))).